Reading from the N-terminus, the 363-residue chain is Putative serine/threonine-protein kinase gskl-1 (363 aa).

Positions 20-304 (FGAHKLCGSG…AIDVLKMPLF (285 aa)) constitute a Protein kinase domain. ATP-binding positions include 26–34 (CGSGRFSNV) and K50. D146 serves as the catalytic Proton acceptor. The disordered stretch occupies residues 311–363 (PPKKRSNGVEMPNLASYTEMHHKREPETEVVADIQTTEKAEKESDSTNEELED). Positions 346 to 355 (TTEKAEKESD) are enriched in basic and acidic residues.

It belongs to the protein kinase superfamily. Ser/Thr protein kinase family. Expressed during multiple stages of spermatogenesis, in males and hermaphrodites (at protein level).

Its subcellular location is the cytoplasm. The protein localises to the cell projection. It is found in the pseudopodium. The enzyme catalyses L-seryl-[protein] + ATP = O-phospho-L-seryl-[protein] + ADP + H(+). It carries out the reaction L-threonyl-[protein] + ATP = O-phospho-L-threonyl-[protein] + ADP + H(+). May be an autophosphorylating tyrosine kinase, a bifunctional (serine/tyrosine-specific) protein kinase, or a serine kinase that is a substrate for an associated tyrosine kinase. Acting in concert with putative serine/threonine-protein kinase gskl-2, required for sister chromatid segregation and spermatid budding during male meiosis. Plays a role in regulating female meiosis II, together with gskl-2. Involved in sperm pseudopod formation and function, together with gskl-2. The chain is Putative serine/threonine-protein kinase gskl-1 from Caenorhabditis elegans.